Consider the following 361-residue polypeptide: Methyltransferase LUC1 (361 aa).

S-adenosyl-L-homocysteine-binding residues include Y18, N66, D89, S126, and F127. 2 residues coordinate Mg(2+): Q156 and F233.

Belongs to the methyltransferase superfamily. Type-7 methyltransferase family. Mg(2+) is required as a cofactor.

It functions in the pathway mycotoxin biosynthesis. In terms of biological role, methyltransferase; part of the gene cluster that mediates the biosynthesis of the mycotoxin lucilactaene and the lucilactaene-related compound NG-391 that act as cell cycle inhibitors with potent growth inhibitory activity against malarial parasites, moderate growth inhibitory activity against cancer cells, and no activity against bacteria and fungi. LUC1 performs the last step of the pathway and methylates the hydroxyl group of demethyllucilactaene at C-21 to yeald lucilactaene. The pathway begins with the hybrid PKS-NRPS synthetase LUC5 which is responsible for the condensation of one acetyl-coenzyme A (CoA) unit with six malonyl-CoA units and the amide linkage of the arising heptaketide and homoserine, subsequently releasing the first intermediate prelucilactaene B. Both the cytochrome P450 monooxygenase LUC2 and the hydrolase LUC6 function in parallel in modification of prelucilactaene B. LUC6 may catalyze the 2-pyrrolidone ring formation to form prelucilactaene C from prelucilactaene B, followed by C-15 hydroxylation by the same enzyme to give prelucilactaene D, which is then converted to prelucilactaene E by epoxidation, and finally to prelucilactaene F by cyclization. Prelucilactane D, prelucilactaene E, and prelucilactaene F can be converted to dihydrolucilactaene, NG391, and lucilactaene, respectively, via C-20 methyl group hydroxylation by the cytochrome P450 monooxygenase LUC2. However, LUC2, unlike FUS8 in fusarin C biosynthesis, is not enough for the full oxidation of the C-20 methyl group into carboxylic acid, which is a prerequisite for the final methylation step. The aldehyde dehydrogenase LUC3 is involved in the biosynthesis by further oxidation of the C-20 alcoholic analog prelucilactaene G into a carboxylic derivative. This unidentified carboxylic derivative may be converted to demethyllucilactaene. As the last step, the methyltransferase LUC1 methylates the hydroxyl group at C-21 of demethyllucilactaene to generate lucilactaene. This is Methyltransferase LUC1 from Fusarium sp.